A 230-amino-acid polypeptide reads, in one-letter code: Leucyl/phenylalanyl-tRNA--protein transferase (230 aa).

Belongs to the L/F-transferase family.

Its subcellular location is the cytoplasm. The catalysed reaction is N-terminal L-lysyl-[protein] + L-leucyl-tRNA(Leu) = N-terminal L-leucyl-L-lysyl-[protein] + tRNA(Leu) + H(+). It catalyses the reaction N-terminal L-arginyl-[protein] + L-leucyl-tRNA(Leu) = N-terminal L-leucyl-L-arginyl-[protein] + tRNA(Leu) + H(+). It carries out the reaction L-phenylalanyl-tRNA(Phe) + an N-terminal L-alpha-aminoacyl-[protein] = an N-terminal L-phenylalanyl-L-alpha-aminoacyl-[protein] + tRNA(Phe). In terms of biological role, functions in the N-end rule pathway of protein degradation where it conjugates Leu, Phe and, less efficiently, Met from aminoacyl-tRNAs to the N-termini of proteins containing an N-terminal arginine or lysine. This is Leucyl/phenylalanyl-tRNA--protein transferase from Proteus mirabilis (strain HI4320).